The primary structure comprises 285 residues: Bifunctional protein FolD (285 aa).

NADP(+) is bound by residues 166–168 (GAS) and isoleucine 232.

Belongs to the tetrahydrofolate dehydrogenase/cyclohydrolase family. In terms of assembly, homodimer.

The enzyme catalyses (6R)-5,10-methylene-5,6,7,8-tetrahydrofolate + NADP(+) = (6R)-5,10-methenyltetrahydrofolate + NADPH. It carries out the reaction (6R)-5,10-methenyltetrahydrofolate + H2O = (6R)-10-formyltetrahydrofolate + H(+). It functions in the pathway one-carbon metabolism; tetrahydrofolate interconversion. Functionally, catalyzes the oxidation of 5,10-methylenetetrahydrofolate to 5,10-methenyltetrahydrofolate and then the hydrolysis of 5,10-methenyltetrahydrofolate to 10-formyltetrahydrofolate. This chain is Bifunctional protein FolD, found in Photobacterium profundum (strain SS9).